The chain runs to 604 residues: MHAYRTHNCAALSKKNVGETVRLSGWVHNKRDHGGVLFVDLRDHYGITQIVADEDSAALPVLDKLKLESVVTIDGDVKARDAEAVNPNLPTGEIEVFARSVEIQSRAEELPLIVNSAEDYPEDVRLKYRFVDLRRERLHRNIMLRSQVITSIRNRMTAQGFTEFQTPILAASSPEGARDYIVPSRLHPGTFYALPQAPQMFKQLLMVAGFDRYFQIAPCFRDEDLRADRSPEFYQLDFEMSFVTQEDVFQAIEPVLAGVFEEFANGKSVTKSGEFPRIPYAEAMLKYGTDKPDLRNPLVISDVTDHFQSSGFGLFEKIVGIGGRVRVIPAPNTQEKSRKFFDDMNDWARKEGFAGLGYVTRKQGEFGGPIAKNHGPENMQKIYDELGLGENDGLFFAAGKEKDAAKLAGAARTRVGEELGLIEQGCFKFCWIVDFPMFEYDEELKKIDFSHNPFSMPQGEMEALENKDPLEILAWQYDIVCNGYELSSGAIRNHKPEIMYKAFEIAGYDRETVDREFSGMIEAFKLGAPPHGGSAPGIDRIVMLLADEPNIREVIAFPLNQKAQDLMMGAPSQVPPKALRDVHIRTVEPPKKQQVGTHLVNDDS.

Glutamate 175 provides a ligand contact to L-aspartate. Positions 199-202 (QMFK) are aspartate. L-aspartate contacts are provided by arginine 221 and histidine 451. ATP is bound at residue 221–223 (RDE). Residue glutamate 485 coordinates ATP. Arginine 492 serves as a coordination point for L-aspartate. Residue 537–540 (GIDR) participates in ATP binding.

It belongs to the class-II aminoacyl-tRNA synthetase family. Type 1 subfamily. As to quaternary structure, homodimer.

It is found in the cytoplasm. It carries out the reaction tRNA(Asx) + L-aspartate + ATP = L-aspartyl-tRNA(Asx) + AMP + diphosphate. Aspartyl-tRNA synthetase with relaxed tRNA specificity since it is able to aspartylate not only its cognate tRNA(Asp) but also tRNA(Asn). Reaction proceeds in two steps: L-aspartate is first activated by ATP to form Asp-AMP and then transferred to the acceptor end of tRNA(Asp/Asn). The chain is Aspartate--tRNA(Asp/Asn) ligase from Erythrobacter litoralis (strain HTCC2594).